The sequence spans 207 residues: Ribonuclease HII (207 aa).

Residues 5–207 (PLIIGVDEAG…APVRALLRPC (203 aa)) form the RNase H type-2 domain. Positions 11, 12, and 117 each coordinate a divalent metal cation.

The protein belongs to the RNase HII family. It depends on Mn(2+) as a cofactor. Mg(2+) serves as cofactor.

The protein resides in the cytoplasm. It catalyses the reaction Endonucleolytic cleavage to 5'-phosphomonoester.. Functionally, endonuclease that specifically degrades the RNA of RNA-DNA hybrids. The chain is Ribonuclease HII from Hyphomonas neptunium (strain ATCC 15444).